We begin with the raw amino-acid sequence, 319 residues long: MIDLAPLARRLAGTPLADWANGLQAQLDTKMAKGHGDLQRWQSALDALPDLQPERIDLLDSFTLQAECNGETRTVLRKALLGLSPWRKGPFNVFGVHIDTEWRSDWKWSRVSPHLDLKGKRVLDVGCGNGYYQWRMLGAGADSVIGVDPNWLFFCQFQAMQRYLPDLPAWHLPFALEDLPANLEGFDTVFSMGVLYHRKSPIDHLLALKDCLVKGGELVMETLVVPGDVHQVLVPEDRYAQMRNVWFLPSVPALELWMRRAGFTDVRCVDVSHTTIEEQRSTEWMRFQSLSDYLDPADHSKTVEGLPAPMRAVIVGRKP.

Carboxy-S-adenosyl-L-methionine-binding positions include lysine 88, tryptophan 102, lysine 107, glycine 126, 176–177 (LE), methionine 192, tyrosine 196, and arginine 311.

The protein belongs to the class I-like SAM-binding methyltransferase superfamily. CmoB family. As to quaternary structure, homotetramer.

It catalyses the reaction carboxy-S-adenosyl-L-methionine + 5-hydroxyuridine(34) in tRNA = 5-carboxymethoxyuridine(34) in tRNA + S-adenosyl-L-homocysteine + H(+). Functionally, catalyzes carboxymethyl transfer from carboxy-S-adenosyl-L-methionine (Cx-SAM) to 5-hydroxyuridine (ho5U) to form 5-carboxymethoxyuridine (cmo5U) at position 34 in tRNAs. This chain is tRNA U34 carboxymethyltransferase, found in Pseudomonas savastanoi pv. phaseolicola (strain 1448A / Race 6) (Pseudomonas syringae pv. phaseolicola (strain 1448A / Race 6)).